A 298-amino-acid polypeptide reads, in one-letter code: MIKVRVPATSANMGPGFDSMGMAVKVYNEFAFREINNGLNFNGVPEEFCNEDNIIYKAMKYCFDKADYKIKGLNISVLNQDIPISRGLGSSSSCIVGGLVGANEILGGKFSKDELLEMAVKIEGHPDNVAPALFGGMVVAIIENNKTVYNKIEIKDKVKFITIVPDFRLSTEKARTVLPKQISRADGIYNIGRAALMISCFVTDRYDLIRSACNDALHQNYRKELIPHFDDVYNKCYELGALGCYLSGAGPTIMAIIDNGANGFSNNIKQYLKDKDIKWGVLELQADNKGAFVIKGDS.

83–93 (PISRGLGSSSS) is an ATP binding site.

Belongs to the GHMP kinase family. Homoserine kinase subfamily.

It is found in the cytoplasm. It carries out the reaction L-homoserine + ATP = O-phospho-L-homoserine + ADP + H(+). Its pathway is amino-acid biosynthesis; L-threonine biosynthesis; L-threonine from L-aspartate: step 4/5. In terms of biological role, catalyzes the ATP-dependent phosphorylation of L-homoserine to L-homoserine phosphate. This is Homoserine kinase from Clostridium botulinum (strain Eklund 17B / Type B).